A 259-amino-acid chain; its full sequence is Large ribosomal subunit protein eL8 (259 aa).

A disordered region spans residues Met-1 to Asn-24. Ser-11 and Ser-33 each carry phosphoserine.

This sequence belongs to the eukaryotic ribosomal protein eL8 family. As to quaternary structure, component of the large ribosomal subunit (LSU). Mature yeast ribosomes consist of a small (40S) and a large (60S) subunit. The 40S small subunit contains 1 molecule of ribosomal RNA (18S rRNA) and at least 33 different proteins. The large 60S subunit contains 3 rRNA molecules (25S, 5.8S and 5S rRNA) and at least 46 different proteins.

The protein resides in the cytoplasm. Its function is as follows. Component of the ribosome, a large ribonucleoprotein complex responsible for the synthesis of proteins in the cell. The small ribosomal subunit (SSU) binds messenger RNAs (mRNAs) and translates the encoded message by selecting cognate aminoacyl-transfer RNA (tRNA) molecules. The large subunit (LSU) contains the ribosomal catalytic site termed the peptidyl transferase center (PTC), which catalyzes the formation of peptide bonds, thereby polymerizing the amino acids delivered by tRNAs into a polypeptide chain. The nascent polypeptides leave the ribosome through a tunnel in the LSU and interact with protein factors that function in enzymatic processing, targeting, and the membrane insertion of nascent chains at the exit of the ribosomal tunnel. In Schizosaccharomyces pombe (strain 972 / ATCC 24843) (Fission yeast), this protein is Large ribosomal subunit protein eL8 (rpl8).